Here is a 672-residue protein sequence, read N- to C-terminus: MTSITHAELGWNEVGTPVSDQFDDVYFSNVNGLEETRYVFLKQNLIPERWQEFDRRRFVIGETGFGTGLNFLAVWQAFNDFRRANPDATLKELHFVSFEKFPLSKQDLIKAHQAWPELAELAEKLHRHYPPAVPECHRIVLDNGAVTLDLWLGDIKDCLPSVPYGEEGIIDTWFLDGFAPSKNPEMWNQDLFNGMAKLARSECRVATFTSAGFVRRGLIEAGFAMKKVKGFGTKREMIAGCMETRQQQSRHAPYFNRTSASHLDSIAIIGGGIASAALAKALVQRGQKVTLYCKHAQAAEGASGNRQGAVYPLLNGNHDGVSRVFAPAFLFARQFVEQAAQALTFDHDWCGVTQLMWDEKSTNKLDKMLSGNFAPELIQKLSVGETAAKIGLPIDMASVHYPLGGWLCPAELTQALFTQLGTLDNFTAKFEQSVEQLIWDERSQQWQVHTQGQHDTYSAVVIANGHEFQTFSQTADIPLGQVKGQVSHVPATETLSKLKSVLCYDGYMTPVNPNNQHLCIGASYDRRHLDTEFDVNAQQENAERLTQCVPNQAWAKEVDTSGNLSRQGIRCVSRDHLPFVGNVGDFSAIKRQYADLPHTQAEEIEVISQFPNLFCLLGLGSRGLSSAPLMAELLASQICNDPLPLPVDVLEELHPSRMWVRKLRKGKAITEL.

Residues 1–243 (MTSITHAELG…KREMIAGCME (243 aa)) are tRNA (mnm(5)s(2)U34)-methyltransferase. An FAD-dependent cmnm(5)s(2)U34 oxidoreductase region spans residues 269–672 (IGGGIASAAL…LRKGKAITEL (404 aa)).

This sequence in the N-terminal section; belongs to the methyltransferase superfamily. tRNA (mnm(5)s(2)U34)-methyltransferase family. In the C-terminal section; belongs to the DAO family. The cofactor is FAD.

The protein resides in the cytoplasm. The catalysed reaction is 5-aminomethyl-2-thiouridine(34) in tRNA + S-adenosyl-L-methionine = 5-methylaminomethyl-2-thiouridine(34) in tRNA + S-adenosyl-L-homocysteine + H(+). Functionally, catalyzes the last two steps in the biosynthesis of 5-methylaminomethyl-2-thiouridine (mnm(5)s(2)U) at the wobble position (U34) in tRNA. Catalyzes the FAD-dependent demodification of cmnm(5)s(2)U34 to nm(5)s(2)U34, followed by the transfer of a methyl group from S-adenosyl-L-methionine to nm(5)s(2)U34, to form mnm(5)s(2)U34. The chain is tRNA 5-methylaminomethyl-2-thiouridine biosynthesis bifunctional protein MnmC from Vibrio vulnificus (strain CMCP6).